A 1165-amino-acid polypeptide reads, in one-letter code: MGTAAGLLLAALLLAGTSWAQREVNIQQGPLYRAEGSQISIWCNVRGYQGPSEQNFLWSIYLPSAPEKEIQMVGTSDPSFSYAIYSQRVRSGDIYVERVSGDHALLHIRQLQEQDAGEYECHTPNTDPTYHGSYSAKMNLHVIPDTLTVSSPAQTLQKVEGGSLQVTCEVSQNSSQHTHLSVSWLRISGGEEHEIISLTQNLSVRAGPTYAQKHSVGDVRMDKLGDSTFRLTLYNLHPSDQGEIHCVGTEWIQDPDGTWFPLTQKRSEGTSVTVQPTDKEFNVRLETERRTYGAGDMASLRCIIDAQNPAERLFAVSWAFNSSLIASQSPGGVPSLTGEYAKREDRGEVRVGKDSDIVFSLKIFHLRPEDSGKYNCRVTERERGPSGELIDRESKRPKNIPISVLPLRTSLTVTVTANSSSVLEGVRLSLTCSVASLAGPQSRISASWHLQDKQGRQREVVRQDRDGVTWAGEQYRERLGTGELRLIRSGSDTFSLELEGSQRTDTGSYECRVAEWVPATDGEWQLLGERSAQANVDIMALETGFAVTAITRTPGVSYFDSFDLQCILKPHYPPWVGVSVTWRFQPAGGGDTHDLVTFSRAGGVQWGERAGSFRGRSVVEKGDSTHTVKLSVSRASDSEAGKYQCVAELWRWEYRGTWTQLAERASNLLEIRVQRPVPRLQVSKVTRTLSVVEGSQVTLSCSIRSQTGPDSRFAVLWFMRQPSGADGKLIVRSNTGMEYGTYAEEASLKGRLQLEVTAPGHYTLTLQGAHADDSGSYYCQVEEWAMDPNQAWYRLAEEASGMTEIRVRVPDANLQLDQIPRNVSALEGQSFTVTCHVLNRTLPDSRLSLEWLSWWAGHMERRALVRLTVDGVTILGSVEEENVAPGLPSRMQVSQPSLGLYALTLRGTEVQDTGTYSCLVQEWLQDPRGQWYKRTEERSGATYVSVRQPDPALQLDSSLLNVSLMEGGHFDLDCVVSSRSRPDSQLAISWSLQGASRGAEQETLLNVDRSGVWAPMAPRWEGRLQQLQLSPTLFRLHVPRVGQGDSGNYTCLVQEWLQGPRGNWYLLAQDESLIGWIRVQSKESNLQSTICANDALFYLVFFYPFPIFGILIITILLVRFRHRPTSKPGEGKNGVPLLWIKEPHLNYSPTCLEPPVLSIHPGTID.

The N-terminal stretch at 1–20 (MGTAAGLLLAALLLAGTSWA) is a signal peptide. The Extracellular segment spans residues 21–1095 (QREVNIQQGP…LQSTICANDA (1075 aa)). 8 consecutive Ig-like C2-type domains span residues 22-139 (REVN…AKMN), 144-262 (PDTL…WFPL), 276-386 (PTDK…RGPS), 406-527 (PLRT…WQLL), 545-661 (FAVT…WTQL), 678-800 (PRLQ…EEAS), 810-934 (PDAN…WYKR), and 951-1067 (PALQ…WYLL). 2 disulfides stabilise this stretch: Cys-43-Cys-121 and Cys-168-Cys-246. Residues 250–252 (EWI) carry the EWI motif motif. 6 cysteine pairs are disulfide-bonded: Cys-302–Cys-376, Cys-432–Cys-511, Cys-566–Cys-645, Cys-701–Cys-779, Cys-835–Cys-918, and Cys-974–Cys-1051. A helical transmembrane segment spans residues 1096-1116 (LFYLVFFYPFPIFGILIITIL). Topologically, residues 1117 to 1165 (LVRFRHRPTSKPGEGKNGVPLLWIKEPHLNYSPTCLEPPVLSIHPGTID) are cytoplasmic.

It is found in the membrane. This Xenopus laevis (African clawed frog) protein is Immunoglobulin superfamily member 3 (igsf3).